Consider the following 96-residue polypeptide: Putative regulatory protein DET0036 (96 aa).

It belongs to the RemA family.

This Dehalococcoides mccartyi (strain ATCC BAA-2266 / KCTC 15142 / 195) (Dehalococcoides ethenogenes (strain 195)) protein is Putative regulatory protein DET0036.